A 387-amino-acid chain; its full sequence is 3-ketoacyl-CoA thiolase (387 aa).

Residue C91 is the Acyl-thioester intermediate of the active site. Active-site proton acceptor residues include H343 and C373.

It belongs to the thiolase-like superfamily. Thiolase family. As to quaternary structure, heterotetramer of two alpha chains (FadB) and two beta chains (FadA).

The protein localises to the cytoplasm. The enzyme catalyses an acyl-CoA + acetyl-CoA = a 3-oxoacyl-CoA + CoA. It functions in the pathway lipid metabolism; fatty acid beta-oxidation. Its function is as follows. Catalyzes the final step of fatty acid oxidation in which acetyl-CoA is released and the CoA ester of a fatty acid two carbons shorter is formed. The sequence is that of 3-ketoacyl-CoA thiolase from Shewanella baltica (strain OS185).